The chain runs to 87 residues: Ribonuclease P protein component 1 (87 aa).

It belongs to the eukaryotic/archaeal RNase P protein component 1 family. As to quaternary structure, consists of a catalytic RNA component and at least 4-5 protein subunits.

The protein resides in the cytoplasm. It carries out the reaction Endonucleolytic cleavage of RNA, removing 5'-extranucleotides from tRNA precursor.. Part of ribonuclease P, a protein complex that generates mature tRNA molecules by cleaving their 5'-ends. The sequence is that of Ribonuclease P protein component 1 from Thermoplasma acidophilum (strain ATCC 25905 / DSM 1728 / JCM 9062 / NBRC 15155 / AMRC-C165).